A 438-amino-acid polypeptide reads, in one-letter code: Fibrous sheath-interacting protein 1 (438 aa).

The segment at 1-111 (MSMDIIKGNL…PEHSDDPKLE (111 aa)) is disordered. Residues 18–32 (SSSRSRPGSRSSNGS) are compositionally biased toward low complexity. The segment covering 53–72 (SGKEGHTSDSRVEERRKISD) has biased composition (basic and acidic residues). S71, S88, and S89 each carry phosphoserine. The stretch at 131-157 (LAKRRIREKEIKKQGLEMRIKLWEELK) forms a coiled coil. Residues 354-390 (SQSNKGDMEHDSNEERNTEPTPGEKILRDNKEQRDRE) form a disordered region. Composition is skewed to basic and acidic residues over residues 359–371 (GDME…ERNT) and 378–390 (KILR…RDRE).

The protein belongs to the FSIP1 family.

This chain is Fibrous sheath-interacting protein 1 (Fsip1), found in Rattus norvegicus (Rat).